The primary structure comprises 120 residues: MPRVKRGVIARARHKKVLNAAKGYRGRRKNVYRIAKQAVMKAGQYAYRDRRQRKRQFRALWIARINAGAREYGLTYSRFINGLKKSAVEVDRKVLADLAVFDKQAFAKFAELAKSGLAAA.

Belongs to the bacterial ribosomal protein bL20 family.

In terms of biological role, binds directly to 23S ribosomal RNA and is necessary for the in vitro assembly process of the 50S ribosomal subunit. It is not involved in the protein synthesizing functions of that subunit. In Methylobacillus flagellatus (strain ATCC 51484 / DSM 6875 / VKM B-1610 / KT), this protein is Large ribosomal subunit protein bL20.